Consider the following 114-residue polypeptide: FK506-binding protein 1 (114 aa).

Positions 26 to 114 constitute a PPIase FKBP-type domain; the sequence is GDLVTIHYTG…IFEVELLKVN (89 aa).

It belongs to the FKBP-type PPIase family. FKBP1 subfamily.

It localises to the cytoplasm. The catalysed reaction is [protein]-peptidylproline (omega=180) = [protein]-peptidylproline (omega=0). Inhibited by both FK506 and rapamycin. Its function is as follows. PPIases accelerate the folding of proteins. It catalyzes the cis-trans isomerization of proline imidic peptide bonds in oligopeptides. The protein is FK506-binding protein 1 (FPR1) of Eremothecium gossypii (strain ATCC 10895 / CBS 109.51 / FGSC 9923 / NRRL Y-1056) (Yeast).